The chain runs to 498 residues: uncharacterized protein (498 aa).

11 helical membrane-spanning segments follow: residues 54 to 74, 100 to 120, 128 to 148, 150 to 170, 188 to 208, 221 to 241, 302 to 322, 326 to 346, 353 to 373, 381 to 401, and 446 to 466; these read LLKM…MAFL, VAVS…VVLV, MLAF…FMSS, GGLI…FPAL, SYLF…AYAL, WIYI…LFAL, VLYG…FVGL, YMTI…AWLS, AVYL…MLAS, TATY…LGWL, and AFTL…FFSL.

This sequence belongs to the major facilitator superfamily. Allantoate permease family.

It is found in the membrane. This is an uncharacterized protein from Schizosaccharomyces pombe (strain 972 / ATCC 24843) (Fission yeast).